A 75-amino-acid chain; its full sequence is uncharacterized protein (75 aa).

Residues 12–32 traverse the membrane as a helical segment; the sequence is LKVFILFTGFTALFYYAMIWV.

Its subcellular location is the cell membrane. This is an uncharacterized protein from Bacillus subtilis (strain 168).